Here is a 94-residue protein sequence, read N- to C-terminus: Large ribosomal subunit protein bL25 (94 aa).

This sequence belongs to the bacterial ribosomal protein bL25 family. Part of the 50S ribosomal subunit; part of the 5S rRNA/L5/L18/L25 subcomplex. Contacts the 5S rRNA. Binds to the 5S rRNA independently of L5 and L18.

Its function is as follows. This is one of the proteins that binds to the 5S RNA in the ribosome where it forms part of the central protuberance. The polypeptide is Large ribosomal subunit protein bL25 (Serratia proteamaculans (strain 568)).